A 243-amino-acid chain; its full sequence is Geranylgeranylglyceryl phosphate synthase (243 aa).

Residues aspartate 22 and serine 51 each contribute to the Mg(2+) site. Sn-glycerol 1-phosphate is bound by residues 169 to 175, 200 to 201, and 222 to 223; these read YLEAGSG, GG, and GT.

It belongs to the GGGP/HepGP synthase family. Group II subfamily. The cofactor is Mg(2+).

The protein localises to the cytoplasm. It carries out the reaction sn-glycerol 1-phosphate + (2E,6E,10E)-geranylgeranyl diphosphate = sn-3-O-(geranylgeranyl)glycerol 1-phosphate + diphosphate. It functions in the pathway membrane lipid metabolism; glycerophospholipid metabolism. Prenyltransferase that catalyzes the transfer of the geranylgeranyl moiety of geranylgeranyl diphosphate (GGPP) to the C3 hydroxyl of sn-glycerol-1-phosphate (G1P). This reaction is the first ether-bond-formation step in the biosynthesis of archaeal membrane lipids. This chain is Geranylgeranylglyceryl phosphate synthase, found in Methanosphaera stadtmanae (strain ATCC 43021 / DSM 3091 / JCM 11832 / MCB-3).